A 34-amino-acid polypeptide reads, in one-letter code: Photosystem I reaction center subunit XII (34 aa).

Residues 4 to 24 (VLSAPEVFIALVVAAHAAVLA) form a helical membrane-spanning segment.

This sequence belongs to the PsaM family.

The protein localises to the cellular thylakoid membrane. This chain is Photosystem I reaction center subunit XII, found in Synechococcus sp. (strain CC9605).